Reading from the N-terminus, the 627-residue chain is (R)-linalool synthase 1, chloroplastic (627 aa).

A chloroplast-targeting transit peptide spans 1-21 (MAFVSIAPLASRCCVHKSFVS). The Mg(2+) site is built by Asp-378, Asp-382, and Glu-530. A DDXXD motif motif is present at residues 378–382 (DDIYD).

This sequence belongs to the terpene synthase family. Tpsd subfamily. Requires Mg(2+) as cofactor. Mn(2+) is required as a cofactor.

The protein localises to the plastid. The protein resides in the chloroplast. The catalysed reaction is (2E)-geranyl diphosphate + H2O = (R)-linalool + diphosphate. It functions in the pathway terpene metabolism; oleoresin biosynthesis. In terms of biological role, terpene synthase (TPS) involved in the biosynthesis of monoterpene natural products included in conifer oleoresin secretions and volatile emissions; these compounds contribute to biotic and abiotic stress defense against herbivores and pathogens. Catalyzes the conversion of (2E)-geranyl diphosphate (GPP) to (R)-linalool. The polypeptide is (R)-linalool synthase 1, chloroplastic (Picea sitchensis (Sitka spruce)).